A 125-amino-acid chain; its full sequence is Large ribosomal subunit protein uL30 (125 aa).

The large ribosomal subunit protein uL30 stretch occupies residues Met-1–Asp-61. Residues Phe-62–Leu-125 form a unknown region.

This sequence belongs to the universal ribosomal protein uL30 family. In terms of assembly, part of the 50S ribosomal subunit.

This chain is Large ribosomal subunit protein uL30, found in Aquifex aeolicus (strain VF5).